The following is a 962-amino-acid chain: Leucine-rich repeat-containing G-protein coupled receptor 6 (962 aa).

Positions 1-16 (MLVVLLILHAVSCAHS) are cleaved as a signal peptide. Residues 20–60 (PGAAVPVKQCPSACQCEEDGILLLVDCSEQGLSSVPTDLSP) form the LRRNT domain. 17 LRR repeats span residues 38–58 (DGIL…PTDL), 59–82 (SPLT…AFRN), 83–106 (LHFL…MLQG), 107–131 (LYNL…PWEL), 133–154 (NLLS…TLSG), 155–178 (MRSL…ALND), 179–202 (LSSL…AFRN), 203–226 (LSNL…CFEG), 228–250 (HSLE…IRTL), 251–273 (AKLQ…AFVG), 275–297 (PLLQ…AFQF), 298–321 (LPKL…LKGT), 322–344 (TSLQ…LCHL), 345–368 (LPKL…YHCT), 370–390 (LQEI…TFQQ), 391–414 (LGSL…AFFS), and 416–438 (QSLI…GLTS). N-linked (GlcNAc...) asparagine glycosylation occurs at Asn-71. An N-linked (GlcNAc...) asparagine glycan is attached at Asn-202. A run of 7 helical transmembrane segments spans residues 559-579 (GMWL…LTVF), 590-610 (FIIG…GTLA), 647-669 (SILF…RAYG), 679-699 (AAAV…LIGV), 723-743 (FMVA…GTYI), 766-786 (VAWL…LTFS), and 801-821 (SVVL…YLLF). Residues Cys-633 and Cys-708 are joined by a disulfide bond.

The protein belongs to the G-protein coupled receptor 1 family.

It localises to the cell membrane. Receptor for R-spondins that potentiates the canonical Wnt signaling pathway. Upon binding to R-spondins (rspo1, rspo2, rspo3 or rspo4), associates with phosphorylated lrp6 and frizzled receptors that are activated by extracellular Wnt receptors, triggering the canonical Wnt signaling pathway to increase expression of target genes. In contrast to classical G-protein coupled receptors, does not activate heterotrimeric G-proteins to transduce the signal. In Danio rerio (Zebrafish), this protein is Leucine-rich repeat-containing G-protein coupled receptor 6 (lgr6).